The following is a 251-amino-acid chain: Acidic leucine-rich nuclear phosphoprotein 32 family member B (251 aa).

3 LRR repeats span residues 16 to 40 (PAAV…LTAE), 43 to 64 (NLEF…PKLP), and 65 to 84 (KLKK…DMLA). Lys86 is subject to N6-acetyllysine. Residues 89-110 (NLTHLNLSGNKLKDISTLEPLK) form an LRR 4 repeat. In terms of domain architecture, LRRCT spans 123-161 (CEVTNLNDYRESVFKLLPQLTYLDGYDREDQEAPDSDAE). Residues 149-233 (DREDQEAPDS…DEDEDEEEEE (85 aa)) are compositionally biased toward acidic residues. The interval 149-251 (DREDQEAPDS…RETDDEGEDD (103 aa)) is disordered. Phosphoserine is present on Ser158. Residues 234–244 (GGKGEKRKRET) show a composition bias toward basic and acidic residues. A Nuclear localization signal motif is present at residues 239 to 242 (KRKR). Thr244 carries the post-translational modification Phosphothreonine.

Belongs to the ANP32 family. As to quaternary structure, interacts with histones H3 and H4. Interacts with KLF5; this interaction induces promoter region-specific histone incorporation and inhibition of histone acetylation by ANP32B. In terms of assembly, (Microbial infection) Interacts with Sendai virus protein M. (Microbial infection) Interacts with Measles virus protein M. As to quaternary structure, (Microbial infection) Interacts with Hendra virus protein M; this interaction promotes nuclear localization of M. In terms of assembly, (Microbial infection) Interacts with influenza virus B protein PB2; this interaction strongly supports influenza B virus replication. Some glutamate residues are glycylated by TTLL8. This modification occurs exclusively on glutamate residues and results in a glycine chain on the gamma-carboxyl group. Post-translationally, directly cleaved by caspase-3/CASP3. In terms of tissue distribution, expressed in heart, lung, pancreas, prostate and in spleen, thymus and placenta.

The protein resides in the nucleus. Its subcellular location is the cytoplasm. Multifunctional protein that is involved in the regulation of many processes including cell proliferation, apoptosis, cell cycle progression or transcription. Regulates the proliferation of neuronal stem cells, differentiation of leukemic cells and progression from G1 to S phase of the cell cycle. As negative regulator of caspase-3-dependent apoptosis, may act as an antagonist of ANP32A in regulating tissue homeostasis. Exhibits histone chaperone properties, able to recruit histones to certain promoters, thus regulating the transcription of specific genes. Also plays an essential role in the nucleocytoplasmic transport of specific mRNAs via the uncommon nuclear mRNA export receptor XPO1/CRM1. Participates in the regulation of adequate adaptive immune responses by acting on mRNA expression and cell proliferation. Its function is as follows. (Microbial infection) Plays an essential role in influenza A and B viral genome replication. Also plays a role in foamy virus mRNA export from the nucleus to the cytoplasm. In Homo sapiens (Human), this protein is Acidic leucine-rich nuclear phosphoprotein 32 family member B (ANP32B).